We begin with the raw amino-acid sequence, 149 residues long: Prefoldin subunit alpha (149 aa).

It belongs to the prefoldin alpha subunit family. Heterohexamer of two alpha and four beta subunits.

The protein localises to the cytoplasm. In terms of biological role, molecular chaperone capable of stabilizing a range of proteins. Seems to fulfill an ATP-independent, HSP70-like function in archaeal de novo protein folding. The sequence is that of Prefoldin subunit alpha from Methanoculleus marisnigri (strain ATCC 35101 / DSM 1498 / JR1).